The chain runs to 499 residues: MSTANKKPAESVSMNAFKQPRSFYLIFSIELWERFGFYGLQGIMAVYLVKQLGMSEADSITLFSSFSALVYGLVAIGGWLGDKVLGTKRVIMLGTIVLAIGYALVAWSGHDAAIVYFGMATIAVGNGLFKANPSALLSTCYEKDDPRLDGAFTMYYMAINIGSFFSMLATPWLAEKFGWSVAFSLSFVGMLITLVNFIFCKKWVKDYGSKPDFAPLHVGKLLATIVGIVVLVAIATWLLHNQGIARLVLGVVALGIVIIFAKEAFAMQGAARRKMIVAFILMLEAIVFFVLYQQMPTSLNFFAIRNVEHSILGIAFQPEQFQALNPFWIMIGSPILAAIYNKMGDRLPMPFKFTIGMLLCSGAFLVLPLGAKFASEAGIVSVNWLILSYALQSIGELMISGLGLAMVAQLVPQRLMGFIMGSWFLTTAGAAMIAGKVANLMAVPENVSDPLQSLEVYGRVFMQIGIATGVIAVLMLLTAPLLNRMTQEDKPKETDTAHA.

Residues 1–34 (MSTANKKPAESVSMNAFKQPRSFYLIFSIELWER) lie on the Cytoplasmic side of the membrane. The chain crosses the membrane as a helical span at residues 35 to 55 (FGFYGLQGIMAVYLVKQLGMS). The Periplasmic portion of the chain corresponds to 56-59 (EADS). Residues 60–80 (ITLFSSFSALVYGLVAIGGWL) form a helical membrane-spanning segment. Residues 81-89 (GDKVLGTKR) are Cytoplasmic-facing. Residues 90-110 (VIMLGTIVLAIGYALVAWSGH) traverse the membrane as a helical segment. Position 111 (aspartate 111) is a topological domain, periplasmic. Residues 112–132 (AAIVYFGMATIAVGNGLFKAN) traverse the membrane as a helical segment. Topologically, residues 133 to 153 (PSALLSTCYEKDDPRLDGAFT) are cytoplasmic. A helical transmembrane segment spans residues 154-174 (MYYMAINIGSFFSMLATPWLA). Residues 175–178 (EKFG) lie on the Periplasmic side of the membrane. The helical transmembrane segment at 179–199 (WSVAFSLSFVGMLITLVNFIF) threads the bilayer. Residues 200–217 (CKKWVKDYGSKPDFAPLH) are Cytoplasmic-facing. Residues 218 to 238 (VGKLLATIVGIVVLVAIATWL) form a helical membrane-spanning segment. Residues 239 to 246 (LHNQGIAR) lie on the Periplasmic side of the membrane. Residues 247 to 267 (LVLGVVALGIVIIFAKEAFAM) traverse the membrane as a helical segment. Residues 268–274 (QGAARRK) are Cytoplasmic-facing. Residues 275–295 (MIVAFILMLEAIVFFVLYQQM) form a helical membrane-spanning segment. Over 296 to 320 (PTSLNFFAIRNVEHSILGIAFQPEQ) the chain is Periplasmic. A helical membrane pass occupies residues 321-341 (FQALNPFWIMIGSPILAAIYN). The Cytoplasmic portion of the chain corresponds to 342–350 (KMGDRLPMP). The helical transmembrane segment at 351 to 371 (FKFTIGMLLCSGAFLVLPLGA) threads the bilayer. Residues 372-383 (KFASEAGIVSVN) are Periplasmic-facing. A helical membrane pass occupies residues 384–404 (WLILSYALQSIGELMISGLGL). The Cytoplasmic portion of the chain corresponds to 405 to 414 (AMVAQLVPQR). A helical transmembrane segment spans residues 415-435 (LMGFIMGSWFLTTAGAAMIAG). The Periplasmic portion of the chain corresponds to 436-459 (KVANLMAVPENVSDPLQSLEVYGR). A helical membrane pass occupies residues 460 to 480 (VFMQIGIATGVIAVLMLLTAP). At 481-499 (LLNRMTQEDKPKETDTAHA) the chain is on the cytoplasmic side.

The protein belongs to the major facilitator superfamily. Proton-dependent oligopeptide transporter (POT/PTR) (TC 2.A.17) family. DtpA subfamily.

It is found in the cell inner membrane. Functionally, proton-dependent permease that transports di- and tripeptides. The protein is Dipeptide and tripeptide permease A of Cronobacter turicensis (strain DSM 18703 / CCUG 55852 / LMG 23827 / z3032).